The chain runs to 656 residues: uncharacterized protein (656 aa).

3 helical membrane-spanning segments follow: residues 7-27 (QQVL…LNHL), 40-60 (LMAM…FWTL), and 210-230 (AVFI…AFTI). Residues 231–280 (TRPIRELLTGVKNIASGDFYQRIDLPFGGELGALIFNFNEMAERLEKYEQ) enclose the HAMP domain. Positions 289-359 (EKAKLETLVS…PILNDIIRKN (71 aa)) constitute a PAS domain. Residues 424–654 (NVSHELRTPL…CFFFDLMIAK (231 aa)) form the Histidine kinase domain. At H427 the chain carries Phosphohistidine; by autocatalysis.

The protein resides in the plastid. It is found in the chloroplast membrane. It carries out the reaction ATP + protein L-histidine = ADP + protein N-phospho-L-histidine.. This is an uncharacterized protein from Porphyra purpurea (Red seaweed).